The following is a 495-amino-acid chain: MAKNNAVAGFNALNGVELNLFTTDELKAIHYATMDVLMNPGVQVSDPEARQIFKENGCEVDEKTNVVKIPEYLVRRALQLAPSRFVLWGRDKKFNTVQECGGKVHWTCFGTGVKMCKYQDGKYVTVDSVEQDIADIAKLCDWAENIDYFSLPVSARDIAGQGAQDVHETLTPIANTAKHYHHIDPVGENVEYYRDIVTAYYGGDEEEARKKPIFSMLLCPTSPLELSVNACQVIIKGARFGMPVNVLSMAMSGGSSPVYLAGTLVTHNAEVLAGITLAQLTVPGTKVWYGSSTTTFDLKKGTAPVGSPELGLISASVAKLAQFYGLPAFVAGTOSDAKIPDNQAGHEKTMTCLLPALAGANTLYGAGMLELGMTFSMEQLVIDNDIIKMTKKALQGVPVNEETLAVESIQKVGIGNNFLALKQTRQLVNYPSDPMLIDRRMFGDWAAAGSKDLASAAHDKVVDVLKNHVVKPIDADILKDMQAVVDRADKAFRGM.

Pyl334 is a non-standard amino acid (pyrrolysine).

This sequence belongs to the trimethylamine methyltransferase family. Can form a complex with MttC.

The enzyme catalyses Co(I)-[trimethylamine-specific corrinoid protein] + trimethylamine + H(+) = methyl-Co(III)-[trimethylamine-specific corrinoid protein] + dimethylamine. Its pathway is one-carbon metabolism; methanogenesis from trimethylamine. Functionally, catalyzes the transfer of a methyl group from trimethylamine to the corrinoid cofactor of MttC. This Methanosarcina acetivorans (strain ATCC 35395 / DSM 2834 / JCM 12185 / C2A) protein is Trimethylamine methyltransferase MttB1 (mttB1).